The following is a 489-amino-acid chain: NAC domain-containing protein 74 (489 aa).

An NAC domain is found at 9-159 (LPPGFGFHPK…AYVLCRITKR (151 aa)). A DNA-binding region spans residues 108–165 (IGTKKTLVFHEGRPPTGRRTEWIMHEYYIDERECQACPDMKDAYVLCRITKRNDWIPG). A compositionally biased stretch (basic and acidic residues) spans 413–427 (KNQAHDVASTKRSDA). Residues 413 to 435 (KNQAHDVASTKRSDAGKPSTELS) are disordered. A helical membrane pass occupies residues 456–476 (WNMILVAGFAIGVAVVALHIG).

As to expression, widely expressed.

It is found in the nucleus. The protein resides in the cell membrane. Its function is as follows. Transcription activator involved in heat and endoplasmic reticulum (ER) stress responses. Regulates the expression of genes involved in ER protein folding and heat stress-responsive genes. Binds directly to the promoter of BZIP74 and regulates its expression in response to heat stress. This chain is NAC domain-containing protein 74, found in Oryza sativa subsp. japonica (Rice).